We begin with the raw amino-acid sequence, 470 residues long: L-fuculokinase (470 aa).

It belongs to the FGGY kinase family. It depends on a divalent metal cation as a cofactor.

It carries out the reaction L-fuculose + ATP = L-fuculose 1-phosphate + ADP + H(+). It functions in the pathway carbohydrate degradation; L-fucose degradation; L-lactaldehyde and glycerone phosphate from L-fucose: step 2/3. In terms of biological role, catalyzes the phosphorylation of L-fuculose. The chain is L-fuculokinase from Haemophilus influenzae (strain ATCC 51907 / DSM 11121 / KW20 / Rd).